The following is a 681-amino-acid chain: Sodium-dependent phosphate transporter 1 (681 aa).

6 helical membrane-spanning segments follow: residues 25 to 45 (NLWMLILGFIIAFVLAFSVGA), 66 to 86 (ACILASIFETVGSALLGAKVS), 106 to 126 (LMAGSVSAMFGSAVWQLVASF), 162 to 182 (IVMSWFVSPLLSGIMSGILFF), 201 to 221 (ALPIFYACTIGINLFSIMYTG), and 234 to 254 (GTILISVGCAVFCALIVWFFV). The tract at residues 266–295 (VKSSPSESPLMEKKSNLKEDHEETKMAPGD) is disordered. Phosphoserine occurs at positions 269 and 273. The segment covering 275–295 (LMEKKSNLKEDHEETKMAPGD) has biased composition (basic and acidic residues). The helical transmembrane segment at 514–534 (VSLLFQFLQILTACFGSFAHG) threads the bilayer. The interval 553–560 (KQEASTKA) is a. The next 3 helical transmembrane spans lie at 561 to 581 (ATPIWLLLYGGVGICMGLWVW), 602 to 622 (FSIELASALTVVIASNIGLPI), and 652 to 672 (IFMAWFVTVPISGVISAAIMA).

The protein belongs to the inorganic phosphate transporter (PiT) (TC 2.A.20) family. In terms of tissue distribution, ubiquitously expressed.

It localises to the cell membrane. It catalyses the reaction 2 Na(+)(out) + phosphate(out) = 2 Na(+)(in) + phosphate(in). Sodium-phosphate symporter which preferentially transports the monovalent form of phosphate with a stoichiometry of two sodium ions per phosphate ion. May play a role in extracellular matrix and cartilage calcification as well as in vascular calcification. Essential for cell proliferation but this function is independent of its phosphate transporter activity. In terms of biological role, (Microbial infection) May function as a retroviral receptor but do not confer infection susceptibility to Gibbon Ape Leukemia Virus (GaLV), Simian sarcoma-associated virus (SSAV) and Feline leukemia virus subgroup B (FeLV-B). This chain is Sodium-dependent phosphate transporter 1 (Slc20a1), found in Mus musculus (Mouse).